A 600-amino-acid chain; its full sequence is DNA primase (600 aa).

A CHC2-type zinc finger spans residues 38–62; it reads CPFHDEKTPSFIVYPTRGHYHCYGC. The region spanning 253–333 is the Toprim domain; the sequence is KRVILVEGQA…GIAVIVCRLP (81 aa). 3 residues coordinate Mg(2+): Glu259, Asp304, and Asp306.

It belongs to the DnaG primase family. As to quaternary structure, monomer. Interacts with DnaB. It depends on Zn(2+) as a cofactor. The cofactor is Mg(2+).

It carries out the reaction ssDNA + n NTP = ssDNA/pppN(pN)n-1 hybrid + (n-1) diphosphate.. Its function is as follows. RNA polymerase that catalyzes the synthesis of short RNA molecules used as primers for DNA polymerase during DNA replication. The polypeptide is DNA primase (Chlamydia muridarum (strain MoPn / Nigg)).